The following is a 159-amino-acid chain: Phosphopantetheine adenylyltransferase (159 aa).

S8 provides a ligand contact to substrate. ATP contacts are provided by residues 8–9 (SF) and H16. K40, L73, and K87 together coordinate substrate. ATP-binding positions include 88 to 90 (GLR), E98, and 122 to 128 (YGYVSST).

The protein belongs to the bacterial CoaD family. Homohexamer. Mg(2+) serves as cofactor.

The protein localises to the cytoplasm. It catalyses the reaction (R)-4'-phosphopantetheine + ATP + H(+) = 3'-dephospho-CoA + diphosphate. Its pathway is cofactor biosynthesis; coenzyme A biosynthesis; CoA from (R)-pantothenate: step 4/5. In terms of biological role, reversibly transfers an adenylyl group from ATP to 4'-phosphopantetheine, yielding dephospho-CoA (dPCoA) and pyrophosphate. In Corynebacterium efficiens (strain DSM 44549 / YS-314 / AJ 12310 / JCM 11189 / NBRC 100395), this protein is Phosphopantetheine adenylyltransferase.